We begin with the raw amino-acid sequence, 447 residues long: Argininosuccinate synthase (447 aa).

ATP-binding positions include 20 to 28 and Ala-46; that span reads AFSGGLDTS. Position 102 (Tyr-102) interacts with L-citrulline. Gly-132 and Thr-134 together coordinate ATP. L-aspartate is bound by residues Thr-134, Asn-138, and Asp-139. Asn-138 is an L-citrulline binding site. ATP is bound at residue Asp-139. The L-citrulline site is built by Arg-142 and Ser-195. Asp-197 is a binding site for ATP. Residues Thr-204, Glu-206, and Glu-283 each coordinate L-citrulline.

Belongs to the argininosuccinate synthase family. Type 2 subfamily. In terms of assembly, homotetramer.

It localises to the cytoplasm. The enzyme catalyses L-citrulline + L-aspartate + ATP = 2-(N(omega)-L-arginino)succinate + AMP + diphosphate + H(+). Its pathway is amino-acid biosynthesis; L-arginine biosynthesis; L-arginine from L-ornithine and carbamoyl phosphate: step 2/3. The sequence is that of Argininosuccinate synthase (argG) from Neisseria meningitidis serogroup B (strain ATCC BAA-335 / MC58).